The sequence spans 960 residues: UPF0182 protein DSY1630 (960 aa).

7 helical membrane-spanning segments follow: residues 7-27 (IMLVLLGIGLILFIALSGLFE), 50-70 (IIQIINGTILFTFIAGTLFSI), 105-125 (TLWLIIISVLISFGVSFVTGF), 169-189 (FGPLFFLTFFTIVFYSFAGVI), 212-232 (LALLITVLFLFKGFGCYFDTF), 256-276 (ALKALLVLCALGVIGGGLAFF), and 285-305 (LPILAIFISIPLLSGLGPMVL). Disordered stretches follow at residues 866–899 (SALAVSPMSAELKPEETEETTEETEEPVDPQEDT) and 924–960 (TGDSVDVEGGKKADEDAHDVQTDPEGSVSSEQSKTNP). The segment covering 881 to 897 (ETEETTEETEEPVDPQE) has biased composition (acidic residues). Positions 931-944 (EGGKKADEDAHDVQ) are enriched in basic and acidic residues. Over residues 950–960 (SVSSEQSKTNP) the composition is skewed to polar residues.

It belongs to the UPF0182 family.

It is found in the cell membrane. This is UPF0182 protein DSY1630 from Desulfitobacterium hafniense (strain Y51).